Consider the following 237-residue polypeptide: Riboflavin kinase (237 aa).

Residues 1-23 (MSLPNPDNRPLLIGPPTGPEAPF) are disordered. 2 residues coordinate Mg(2+): Thr-46 and Asn-48. Residues 82–126 (VLYQKPPTSEPVMMDPVQQQQQQQQQQRNQQQQQEGGVGSAQQEK) form a disordered region. The segment covering 99–115 (QQQQQQQQQQRNQQQQQ) has biased composition (low complexity). Glu-158 functions as the Nucleophile in the catalytic mechanism.

It belongs to the flavokinase family. Zn(2+) serves as cofactor. Requires Mg(2+) as cofactor.

The catalysed reaction is riboflavin + ATP = FMN + ADP + H(+). The protein operates within cofactor biosynthesis; FMN biosynthesis; FMN from riboflavin (ATP route): step 1/1. Its function is as follows. Catalyzes the phosphorylation of riboflavin (vitamin B2) to form flavin mononucleotide (FMN) coenzyme. The protein is Riboflavin kinase (fmn1) of Neurospora crassa (strain ATCC 24698 / 74-OR23-1A / CBS 708.71 / DSM 1257 / FGSC 987).